The primary structure comprises 382 residues: Na(+)/H(+) antiporter NhaA (382 aa).

Transmembrane regions (helical) follow at residues 14–34 (AGGI…NSSF), 49–69 (MSVS…LIGL), 87–107 (IFPA…YVAF), 117–137 (GWAI…ALLG), 146–166 (VFLL…IAFF), 171–191 (LSVL…LLNS), 205–225 (FILW…GVVL), 247–267 (ALHP…NAGI), 285–305 (VALG…YVAV), 321–341 (IFAV…ISSL), and 356–376 (LGIL…LHIS).

It belongs to the NhaA Na(+)/H(+) (TC 2.A.33) antiporter family.

Its subcellular location is the cell inner membrane. It carries out the reaction Na(+)(in) + 2 H(+)(out) = Na(+)(out) + 2 H(+)(in). In terms of biological role, na(+)/H(+) antiporter that extrudes sodium in exchange for external protons. In Aliivibrio salmonicida (strain LFI1238) (Vibrio salmonicida (strain LFI1238)), this protein is Na(+)/H(+) antiporter NhaA.